The following is a 160-amino-acid chain: Small ribosomal subunit protein uS7 (160 aa).

It belongs to the universal ribosomal protein uS7 family. As to quaternary structure, part of the 30S ribosomal subunit. Contacts proteins S9 and S11.

In terms of biological role, one of the primary rRNA binding proteins, it binds directly to 16S rRNA where it nucleates assembly of the head domain of the 30S subunit. Is located at the subunit interface close to the decoding center, probably blocks exit of the E-site tRNA. In Rickettsia akari (strain Hartford), this protein is Small ribosomal subunit protein uS7.